The following is a 488-amino-acid chain: Zinc finger protein 345 (488 aa).

C2H2-type zinc fingers lie at residues 62–84 (LECK…QRIH), 90–112 (YECK…QRIH), 118–140 (FECK…QRIH), 146–168 (YECK…QIIH), 174–196 (YECK…HRIH), 202–224 (YECI…RRIH), 230–252 (YECK…QRIH), 258–280 (YICN…QRIH), 286–308 (YVCK…QRIH), 314–336 (YECK…QRMH), 342–364 (YECK…HRIH), 370–392 (YECK…QLIH), 398–420 (YECK…QRIH), 426–448 (YECK…QRIH), and 454–476 (YECK…KKSH).

Belongs to the krueppel C2H2-type zinc-finger protein family.

Its subcellular location is the nucleus. May be involved in transcriptional regulation. In Homo sapiens (Human), this protein is Zinc finger protein 345 (ZNF345).